A 248-amino-acid polypeptide reads, in one-letter code: Probable transcriptional regulatory protein Syncc9902_0542 (248 aa).

The protein belongs to the TACO1 family.

It localises to the cytoplasm. This Synechococcus sp. (strain CC9902) protein is Probable transcriptional regulatory protein Syncc9902_0542.